A 58-amino-acid chain; its full sequence is Large ribosomal subunit protein uL30 (58 aa).

Belongs to the universal ribosomal protein uL30 family. As to quaternary structure, part of the 50S ribosomal subunit.

In Pseudomonas putida (strain ATCC 700007 / DSM 6899 / JCM 31910 / BCRC 17059 / LMG 24140 / F1), this protein is Large ribosomal subunit protein uL30.